Reading from the N-terminus, the 49-residue chain is uncharacterized protein (49 aa).

The protein belongs to the ELIP/psbS family.

It localises to the plastid. The protein localises to the cyanelle. Its function is as follows. Possible role in chlorophyll and/or carotenoid binding. This is an uncharacterized protein from Cyanophora paradoxa.